Consider the following 470-residue polypeptide: Aminodeoxychorismate synthase component 1 (470 aa).

It belongs to the anthranilate synthase component I family. In terms of assembly, monomer. Heterodimer consisting of two non-identical subunits: a glutamine amidotransferase subunit (PabA) and a aminodeoxychorismate synthase subunit (PabB). Requires Mg(2+) as cofactor.

It carries out the reaction chorismate + L-glutamine = 4-amino-4-deoxychorismate + L-glutamate. The protein operates within cofactor biosynthesis; tetrahydrofolate biosynthesis; 4-aminobenzoate from chorismate: step 1/2. Its function is as follows. Part of a heterodimeric complex that catalyzes the two-step biosynthesis of 4-amino-4-deoxychorismate (ADC), a precursor of p-aminobenzoate (PABA) and tetrahydrofolate. In the first step, a glutamine amidotransferase (PabA) generates ammonia as a substrate that, along with chorismate, is used in the second step, catalyzed by aminodeoxychorismate synthase (PabB) to produce ADC. The sequence is that of Aminodeoxychorismate synthase component 1 (pabB) from Lactococcus lactis subsp. lactis (Streptococcus lactis).